A 502-amino-acid chain; its full sequence is MSIRAEEISALIKQQIENYQSEIEVSDVGTVIQVGDGIARAHGLDNVMAGELVEFSNGVMGLAQNLEENNVGIIILGPYTEIREGDEVRRTGRIMQVPVGKELIGRVVNPLGQPVDGLGPINTTNTRPIESPAPGVMDRKSVHEPLQTGIKAIDALVPIGRGQRELIIGDRQTGKTAVALDTIINQKDEDMICIYVAIGQKESTVRNVVETLRKHGALDYTIVVTASASQPAPLLYLAPYAGVTMGEEFMYNGKHVLVVYDDLSKQAAAYRELSLLLRRPPGREAYPGDVFYLHSRLLERAAKLSDAKGGGSLTALPFIETQAGDVSAYIPTNVISITDGQIFLQSDLFFSGVRPAIDAGTSVSRVGGSAQIKAMSKVSGTLRLDLASYRELEAFAQFGSDLDKATQAKLNRGARTVEVLKQGLHKPLRVEKQVIILYALTRGFLDDIPVVDITRFEEEFHAWLDSNATDLLEEIRTTKKLADDDKFAAAINGFKKVFVASE.

Positions 115–135 (VDGLGPINTTNTRPIESPAPG) are disordered. 169–176 (GDRQTGKT) provides a ligand contact to ATP.

The protein belongs to the ATPase alpha/beta chains family. In terms of assembly, F-type ATPases have 2 components, CF(1) - the catalytic core - and CF(0) - the membrane proton channel. CF(1) has five subunits: alpha(3), beta(3), gamma(1), delta(1), epsilon(1). CF(0) has three main subunits: a(1), b(2) and c(9-12). The alpha and beta chains form an alternating ring which encloses part of the gamma chain. CF(1) is attached to CF(0) by a central stalk formed by the gamma and epsilon chains, while a peripheral stalk is formed by the delta and b chains.

Its subcellular location is the cell membrane. The catalysed reaction is ATP + H2O + 4 H(+)(in) = ADP + phosphate + 5 H(+)(out). In terms of biological role, produces ATP from ADP in the presence of a proton gradient across the membrane. The alpha chain is a regulatory subunit. This Bacillus cereus (strain B4264) protein is ATP synthase subunit alpha.